The sequence spans 316 residues: Glutathione synthetase (316 aa).

The region spanning 124–311 (NEKLAALLFP…IAGLLFDAIE (188 aa)) is the ATP-grasp domain. 151 to 208 (FVLAHGQAVLKPLDGMGGRSIFRSGTGDPNLNVILETLTDGGRKLTLAQRFIPDITAG) serves as a coordination point for ATP. Positions 282 and 284 each coordinate Mg(2+).

Belongs to the prokaryotic GSH synthase family. It depends on Mg(2+) as a cofactor. Mn(2+) serves as cofactor.

The enzyme catalyses gamma-L-glutamyl-L-cysteine + glycine + ATP = glutathione + ADP + phosphate + H(+). It participates in sulfur metabolism; glutathione biosynthesis; glutathione from L-cysteine and L-glutamate: step 2/2. This Xanthomonas campestris pv. campestris (strain ATCC 33913 / DSM 3586 / NCPPB 528 / LMG 568 / P 25) protein is Glutathione synthetase.